The primary structure comprises 1816 residues: Kinesin-like protein KIF1B (1816 aa).

The residue at position 2 (serine 2) is an N-acetylserine. In terms of domain architecture, Kinesin motor spans 5–354 (SVKVAVRVRP…LRYADRAKQI (350 aa)). 97–104 (GQTGAGKS) provides a ligand contact to ATP. The tract at residues 270-350 (NINKSLTTLG…TLSTLRYADR (81 aa)) is interaction with KIFBP. Residues 431 to 450 (FSTASMGSLTSSPSSCSLNS) form a disordered region. The span at 432 to 450 (STASMGSLTSSPSSCSLNS) shows a compositional bias: low complexity. Positions 470 to 512 (GEEAIERLKESEKIIAELNETWEEKLRKTEAIRMEREALLAEM) form a coiled coil. The FHA domain occupies 556–612 (TRVGQADAERRQDIVLSGAHIKEEHCIFRSERNNTGEVIVTLEPCERSETYVNGKRV). Phosphothreonine occurs at positions 647 and 652. The stretch at 672 to 731 (IDMKQEMEKRLQEMEILYKREKEEADLLLEQQRLDYESKLQALQKQVETRSLAAETTEEE) forms a coiled coil. 5 positions are modified to phosphoserine: serine 1054, serine 1057, serine 1416, serine 1454, and serine 1487. The segment at 1550-1570 (STTTFESAITPSESSGYDSAD) is disordered. Phosphoserine occurs at positions 1573, 1603, 1610, and 1613. Over residues 1620 to 1637 (SVSSFSSSTLTPSSTCPS) the composition is skewed to low complexity. Positions 1620-1659 (SVSSFSSSTLTPSSTCPSLVDSRSSSMDQKTPEANSRASS) are disordered. The span at 1640-1659 (DSRSSSMDQKTPEANSRASS) shows a compositional bias: polar residues. A PH domain is found at 1701–1799 (VVSKKGYLHF…WLYAFNPLLA (99 aa)).

The protein belongs to the TRAFAC class myosin-kinesin ATPase superfamily. Kinesin family. Unc-104 subfamily. In terms of assembly, monomer. Interacts with KIFBP; positively regulates KIF1B microtubule motor activity. Interacts (via C-terminus end of the kinesin-motor domain) with CHP1; the interaction occurs in a calcium-dependent manner. Interacts with MADD (via death domain); links this isoform of KIF1B to Rab3-carrying vesicles in anterograde synaptic vesicle transport. Expressed in the brain with lower expression in testis and liver (at protein level). Strongly expressed in the brain and ovary, with lower expression in lung, kidney, uterus, testis and liver. In terms of tissue distribution, isoform 2 is expressed in non-neuronal tissues.

It is found in the cytoplasm. It localises to the cytoskeleton. The protein localises to the cytoplasmic vesicle. The protein resides in the secretory vesicle. Its subcellular location is the synaptic vesicle membrane. It is found in the lysosome. It catalyses the reaction ATP + H2O + a kinesin associated with a microtubule at position (n) = ADP + phosphate a kinesin associated with a microtubule at position (n+1, toward the plus end).. In terms of biological role, has a plus-end-directed microtubule motor activity and functions as a motor for transport of vesicles and organelles along microtubules. Its function is as follows. Has a plus-end-directed microtubule motor activity and functions as a motor for anterograde synaptic vesicle transport along axonal microtubules from the cell body to the presynapse in neuronal cells. Has a plus-end-directed microtubule motor activity and functions as a motor for the translocation of lysosomes from perinuclear regions to the cell periphery. The sequence is that of Kinesin-like protein KIF1B from Rattus norvegicus (Rat).